A 141-amino-acid chain; its full sequence is uncharacterized protein (141 aa).

The segment at 1–101 is disordered; it reads FRGRAPRPLV…PDPGRSRRAT (101 aa). The segment covering 27–70 has biased composition (basic and acidic residues); the sequence is QVRDCGREGDLRAGKAADRRLPRARETCSRFGEGVRQKDVHKGP.

This is an uncharacterized protein from Dhori virus (strain Indian/1313/61) (Dho).